A 117-amino-acid polypeptide reads, in one-letter code: Large ribosomal subunit protein uL18 (117 aa).

Belongs to the universal ribosomal protein uL18 family. Part of the 50S ribosomal subunit; part of the 5S rRNA/L5/L18/L25 subcomplex. Contacts the 5S and 23S rRNAs.

Functionally, this is one of the proteins that bind and probably mediate the attachment of the 5S RNA into the large ribosomal subunit, where it forms part of the central protuberance. The polypeptide is Large ribosomal subunit protein uL18 (Yersinia pseudotuberculosis serotype O:1b (strain IP 31758)).